Reading from the N-terminus, the 503-residue chain is Maturase K (503 aa).

It belongs to the intron maturase 2 family. MatK subfamily.

It localises to the plastid. It is found in the chloroplast. In terms of biological role, usually encoded in the trnK tRNA gene intron. Probably assists in splicing its own and other chloroplast group II introns. In Rosa carolina (Pasture rose), this protein is Maturase K.